A 726-amino-acid chain; its full sequence is Transmembrane channel-like protein 8 (726 aa).

At 1–114 (MLLPRSVSSE…GIRSYFTFLR (114 aa)) the chain is on the cytoplasmic side. The residue at position 6 (Ser6) is a Phosphoserine. Residues 115–135 (FLLLLNLLSLLLTASFVLLPL) form a helical membrane-spanning segment. Residues 136–200 (VWLRPPDPGP…VGPESSSVYS (65 aa)) lie on the Lumenal side of the membrane. Residue Asn148 is glycosylated (N-linked (GlcNAc...) asparagine). A helical transmembrane segment spans residues 201–221 (IRLAYLLSPLACLLLCFCGTL). At 222-299 (RRMVKGLPQK…AQTACRLLSY (78 aa)) the chain is on the cytoplasmic side. A helical transmembrane segment spans residues 300–320 (LRVNVLNGLLVVGAISAIFWA). The Lumenal segment spans residues 321 to 338 (TKYSQDNKEESLFLLLQY). Residues 339-359 (LPPGVIALVNFLGPLLFTFLV) form a helical membrane-spanning segment. At 360–426 (QLENYPPNTE…QCWENSVGEE (67 aa)) the chain is on the cytoplasmic side. Residues 362–530 (ENYPPNTEVN…SSRPFRASSS (169 aa)) are TMC domain. Residues 427–447 (LYKLSIFNFLLTVAFAFLVTL) form a helical membrane-spanning segment. Residues 448–488 (PRRLLVDRFSGRFWAWLEREEFLVPKNVLDIVAGQTVTWMG) lie on the Lumenal side of the membrane. Residues 489-509 (LFYCPLLPLLNSVFLFLTFYI) form a helical membrane-spanning segment. Topologically, residues 510 to 531 (KKYTLLKNSRASSRPFRASSST) are cytoplasmic. Residues 532 to 552 (FFFQLVLLLGLLLAAVPLGYV) traverse the membrane as a helical segment. Topologically, residues 553 to 594 (VSSIHSSWDCGLFTNYSAPWQVVPELVALGLPPIGQRALHYL) are lumenal. N-linked (GlcNAc...) asparagine glycosylation occurs at Asn567. The helical transmembrane segment at 595–615 (GSHAFSFPLLIMLSLVLTVCV) threads the bilayer. Residues 616-726 (SQTQANARAI…RFRFPSGAEL (111 aa)) are Cytoplasmic-facing. Residues 651-726 (PEPGPSDSPG…RFRFPSGAEL (76 aa)) form a disordered region. Residues 652–662 (EPGPSDSPGPK) are compositionally biased toward pro residues. 2 positions are modified to phosphoserine: Ser658 and Ser673.

This sequence belongs to the TMC family. As to quaternary structure, interacts with TMC6. Interacts and forms a complex with TMC6 and CIB1; the interaction stabilizes each component of the complex. Interacts and forms a complex with TMC6 and SLC30A1/ZNT1; the interaction regulates zinc transport into the ER. Interacts with TRADD; the interaction competes with TRADD/RIPK1/TRAF2/cIAPs complex I formation and facilites complex II formation. (Microbial infection) Interacts with human papillomavirus 16/HPV16 protein E5; the interaction alleviates TMC8-mediated transcription factors inhibition. In terms of tissue distribution, expressed in placenta, prostate and testis.

The protein resides in the endoplasmic reticulum membrane. The protein localises to the golgi apparatus membrane. It localises to the nucleus membrane. Acts as a regulatory protein involved in the regulation of numerous cellular processes. Together with its homolog TMC6/EVER1, forms a complex with calcium-binding protein CIB1 in lymphocytes and keratynocytes where TMC6 and TMC8 stabilize CIB1 levels and reciprocally. Together with TMC6, also forms a complex with and activates zinc transporter ZNT1 at the ER membrane of keratynocytes, thereby facilitating zinc uptake into the ER. Also inhibits receptor-mediated calcium release from ER stores and calcium activated and volume regulated chloride channels. Down-regulates the activity of transcription factors induced by zinc and cytokines. Also sequesters TRADD which impairs the recruitment of TRAF2 and RIPK1 in the pro-survival complex I and promotes proapoptotic complex II formation, and may therefore be involved in TNF-induced cell death/survival decisions. In Homo sapiens (Human), this protein is Transmembrane channel-like protein 8.